Here is a 195-residue protein sequence, read N- to C-terminus: Glycerol-3-phosphate acyltransferase (195 aa).

6 consecutive transmembrane segments (helical) span residues 2–22 (IFFS…SSAI), 54–74 (IAIS…WLGY), 80–100 (PIFL…PIFF), 107–127 (GVAT…IVMI), 132–152 (LTVL…FIIP), and 155–175 (AWHF…LVVI).

This sequence belongs to the PlsY family. As to quaternary structure, probably interacts with PlsX.

The protein resides in the cell inner membrane. The enzyme catalyses an acyl phosphate + sn-glycerol 3-phosphate = a 1-acyl-sn-glycero-3-phosphate + phosphate. The protein operates within lipid metabolism; phospholipid metabolism. Its function is as follows. Catalyzes the transfer of an acyl group from acyl-phosphate (acyl-PO(4)) to glycerol-3-phosphate (G3P) to form lysophosphatidic acid (LPA). This enzyme utilizes acyl-phosphate as fatty acyl donor, but not acyl-CoA or acyl-ACP. In Blochmanniella pennsylvanica (strain BPEN), this protein is Glycerol-3-phosphate acyltransferase.